A 300-amino-acid chain; its full sequence is Epimerase family protein MW0731 (300 aa).

The protein belongs to the NAD(P)-dependent epimerase/dehydratase family. SDR39U1 subfamily.

The polypeptide is Epimerase family protein MW0731 (Staphylococcus aureus (strain MW2)).